We begin with the raw amino-acid sequence, 180 residues long: Urease accessory protein UreE (180 aa).

The disordered stretch occupies residues 71 to 90; that stretch reads AAPSGAGHGDGEQDGTGAPG.

This sequence belongs to the UreE family.

The protein resides in the cytoplasm. Its function is as follows. Involved in urease metallocenter assembly. Binds nickel. Probably functions as a nickel donor during metallocenter assembly. This is Urease accessory protein UreE from Kocuria rhizophila (strain ATCC 9341 / DSM 348 / NBRC 103217 / DC2201).